The primary structure comprises 557 residues: Probable serine/threonine-protein kinase WNK7 (557 aa).

The Protein kinase domain occupies 28–285 (IRYKEVIGKG…AEELLLDSFL (258 aa)). ATP contacts are provided by residues 108 to 111 (TELF) and Lys-158. The active-site Proton acceptor is the Asp-175. A compositionally biased stretch (polar residues) spans 451 to 477 (QNQSSKDNHQNGASSQAGESISHSLSS). The tract at residues 451–517 (QNQSSKDNHQ…EEEEDERLKE (67 aa)) is disordered. Position 505 is a phosphoserine (Ser-505).

Belongs to the protein kinase superfamily. Ser/Thr protein kinase family. WNK subfamily.

It catalyses the reaction L-seryl-[protein] + ATP = O-phospho-L-seryl-[protein] + ADP + H(+). The catalysed reaction is L-threonyl-[protein] + ATP = O-phospho-L-threonyl-[protein] + ADP + H(+). In terms of biological role, may regulate flowering time by modulating the photoperiod pathway. The sequence is that of Probable serine/threonine-protein kinase WNK7 (WNK7) from Arabidopsis thaliana (Mouse-ear cress).